Reading from the N-terminus, the 273-residue chain is Bis(5'-nucleosyl)-tetraphosphatase, symmetrical (273 aa).

This sequence belongs to the Ap4A hydrolase family.

The enzyme catalyses P(1),P(4)-bis(5'-adenosyl) tetraphosphate + H2O = 2 ADP + 2 H(+). Hydrolyzes diadenosine 5',5'''-P1,P4-tetraphosphate to yield ADP. This is Bis(5'-nucleosyl)-tetraphosphatase, symmetrical from Histophilus somni (strain 129Pt) (Haemophilus somnus).